The primary structure comprises 599 residues: Elongation factor 4 (599 aa).

In terms of domain architecture, tr-type G spans 5–187 (SHIRNFSIIA…RLVTAIPAPE (183 aa)). GTP contacts are provided by residues 17–22 (DHGKST) and 134–137 (NKMD).

The protein belongs to the TRAFAC class translation factor GTPase superfamily. Classic translation factor GTPase family. LepA subfamily.

The protein localises to the cell inner membrane. It catalyses the reaction GTP + H2O = GDP + phosphate + H(+). Functionally, required for accurate and efficient protein synthesis under certain stress conditions. May act as a fidelity factor of the translation reaction, by catalyzing a one-codon backward translocation of tRNAs on improperly translocated ribosomes. Back-translocation proceeds from a post-translocation (POST) complex to a pre-translocation (PRE) complex, thus giving elongation factor G a second chance to translocate the tRNAs correctly. Binds to ribosomes in a GTP-dependent manner. The chain is Elongation factor 4 from Pseudomonas aeruginosa (strain LESB58).